Reading from the N-terminus, the 153-residue chain is Regulator of ribonuclease activity B (153 aa).

Residues 114–153 (DPNADDDEYGDDGEFLDDEDEYGDDGEFFDDEDEEEPRVH) are disordered. Positions 115 to 153 (PNADDDEYGDDGEFLDDEDEYGDDGEFFDDEDEEEPRVH) are enriched in acidic residues.

Belongs to the RraB family. As to quaternary structure, interacts with the C-terminal region of Rne.

Its subcellular location is the cytoplasm. Globally modulates RNA abundance by binding to RNase E (Rne) and regulating its endonucleolytic activity. Can modulate Rne action in a substrate-dependent manner by altering the composition of the degradosome. This is Regulator of ribonuclease activity B from Haemophilus influenzae (strain ATCC 51907 / DSM 11121 / KW20 / Rd).